A 158-amino-acid polypeptide reads, in one-letter code: Small ribosomal subunit protein uS15 (158 aa).

Residues 1-10 (MARMHTRRRG) show a composition bias toward basic residues. The disordered stretch occupies residues 1–66 (MARMHTRRRG…EGVKGTPIPD (66 aa)). A compositionally biased stretch (acidic residues) spans 21–32 (DPPEWSDIDADA). Over residues 33-45 (IEERVVELAEQGH) the composition is skewed to basic and acidic residues.

Belongs to the universal ribosomal protein uS15 family. In terms of assembly, part of the 30S ribosomal subunit.

The polypeptide is Small ribosomal subunit protein uS15 (Haloquadratum walsbyi (strain DSM 16790 / HBSQ001)).